The sequence spans 573 residues: Solute carrier family 41 member 2 (573 aa).

Topologically, residues 1-162 (MTHSKGRPVT…KESSGVMALQ (162 aa)) are extracellular. Phosphoserine is present on residues Ser-137 and Ser-138. Residues 163–183 (ILVPFLLAGFGTVSAGMVLDI) traverse the membrane as a helical segment. Topologically, residues 184-195 (VQHWEVFKNVTE) are cytoplasmic. The chain crosses the membrane as a helical span at residues 196–216 (VFILVPALLGLKGNLEMTLAS). The Extracellular segment spans residues 217 to 245 (RLSTAVNVGKMDSPIEKWNLIIGNLALKQ). A helical membrane pass occupies residues 246–266 (VQATVVGFLAAVAAIILGWIP). The Cytoplasmic portion of the chain corresponds to 267–282 (EGKYYLSHSILLCSSS). The chain crosses the membrane as a helical span at residues 283 to 303 (VATAFIASLLQGIIMVGVIVG). The Extracellular portion of the chain corresponds to 304–313 (SKKTGINPDN). Residues 314–334 (VATPIAASFGDLITLAILAWI) form a helical membrane-spanning segment. Residues 335 to 347 (SQGLYSCLETYYY) lie on the Cytoplasmic side of the membrane. A helical transmembrane segment spans residues 348–368 (ISPLVCAFFLALTPIWIIIAA). The Extracellular segment spans residues 369–376 (KHPATRTV). A helical transmembrane segment spans residues 377–397 (LHSGWEPVITAMVISSIGGLI). Topologically, residues 398–406 (LDTTVSDPN) are cytoplasmic. A helical membrane pass occupies residues 407–427 (LVGIVVYTPVINGIGGNLVAI). The Extracellular segment spans residues 428-469 (QASRISTYLHLHSIPGELPEEPKGCSYPFRTFFGSGVNNKSA). The helical transmembrane segment at 470–490 (QVLLLFVIPGHLIFLYTIHLM) threads the bilayer. Over 491–498 (KSGHTSLT) the chain is Cytoplasmic. Residues 499–519 (VVFVVVYLFAAVLQVFTLLWI) form a helical membrane-spanning segment. Residues 520-543 (ADWMVHRFWRKGKDPDSFSIPYLT) are Extracellular-facing. The helical transmembrane segment at 544–564 (ALGDLLGTALLALSFHFLWLI) threads the bilayer. At 565–573 (GDRDGDVGD) the chain is on the cytoplasmic side.

The protein belongs to the SLC41A transporter family.

The protein resides in the cell membrane. It catalyses the reaction Mg(2+)(in) = Mg(2+)(out). It carries out the reaction Mn(2+)(in) = Mn(2+)(out). The enzyme catalyses Co(2+)(in) = Co(2+)(out). The catalysed reaction is Ni(2+)(in) = Ni(2+)(out). It catalyses the reaction Fe(2+)(in) = Fe(2+)(out). Functionally, acts as a plasma-membrane magnesium transporter. Can also mediate the transport of other divalent metal cations in an order of Ba(2+) &gt; Ni(2+) &gt; Co(2+) &gt; Fe(2+) &gt; Mn(2+). The sequence is that of Solute carrier family 41 member 2 (Slc41a2) from Mus musculus (Mouse).